A 1064-amino-acid chain; its full sequence is Lysine-specific demethylase 4A (1064 aa).

Ala-2 carries the post-translational modification N-acetylalanine. Residues 14 to 56 (IMTFYPTMEEFRNFSRYIAYIESQGAHRAGLAKVVPPKEWKPR) enclose the JmjN domain. Tyr-132 contributes to the 2-oxoglutarate binding site. The JmjC domain maps to 142-308 (EKHVDEWNIG…YGKQAVLCSC (167 aa)). Fe cation is bound by residues His-188 and Glu-190. 2-oxoglutarate is bound by residues Asn-198 and Lys-206. Residues Cys-234 and His-240 each coordinate Zn(2+). Lys-241 contributes to the 2-oxoglutarate binding site. His-276 is a binding site for Fe cation. Residues Cys-306 and Cys-308 each coordinate Zn(2+). Disordered stretches follow at residues 358 to 384 (ELPP…EEGD), 501 to 537 (FSGS…RAQG), and 616 to 642 (SDDE…PLSQ). Acidic residues predominate over residues 366–382 (EEECPEDDMEGVEDGEE). The span at 509–532 (SSSLGSGSSRDSVSSDSETSEPLS) shows a compositional bias: low complexity. At Ser-523 the chain carries Phosphoserine. The interval 597–638 (RQPLSKLPRHHPLVLQECVSDDETSEQLTPEEEAEETEAWAK) is interaction with NCOR1. Residues 616 to 634 (SDDETSEQLTPEEEAEETE) are compositionally biased toward acidic residues. The PHD-type 1 zinc finger occupies 709–767 (MCFTSTGCGTDINLSTPYLEEDGTSILVSCKKCSVRVHASCYGVPPAKASEDWMCSRCS). The C2HC pre-PHD-type zinc finger occupies 772-805 (EEDCCLCSLRGGALQRANDDRWVHVSCAVAILEA). Residues 828–885 (LKCIFCKKRRKRTAGCCVQCSHGRCPTAFHVSCAQAAGVMMQPDDWPFVVFITCFRHK) form a PHD-type 2 zinc finger. Tudor domains lie at 897–954 (QSIT…CLQF) and 955–1011 (GPPA…EELP).

This sequence belongs to the JHDM3 histone demethylase family. In terms of assembly, interacts with histone deacetylase proteins HDAC1, HDAC2 and HDAC3. Interacts with RB and NCOR1. Interacts with VRK1. Fe(2+) serves as cofactor. In terms of processing, ubiquitinated by RNF8 and RNF168, leading to its degradation. Degradation promotes accessibility of H4K20me2 mark for DNA repair protein TP53BP1, which is then recruited. Also ubiquitinated by the SCF(FBXO22) complex; leading to proteasomal degradation.

It is found in the nucleus. It carries out the reaction N(6),N(6),N(6)-trimethyl-L-lysyl(9)-[histone H3] + 2 2-oxoglutarate + 2 O2 = N(6)-methyl-L-lysyl(9)-[histone H3] + 2 formaldehyde + 2 succinate + 2 CO2. The enzyme catalyses N(6),N(6),N(6)-trimethyl-L-lysyl(36)-[histone H3] + 2 2-oxoglutarate + 2 O2 = N(6)-methyl-L-lysyl(36)-[histone H3] + 2 formaldehyde + 2 succinate + 2 CO2. Functionally, histone demethylase that specifically demethylates 'Lys-9' and 'Lys-36' residues of histone H3, thereby playing a central role in histone code. Does not demethylate histone H3 'Lys-4', H3 'Lys-27' nor H4 'Lys-20'. Demethylates trimethylated H3 'Lys-9' and H3 'Lys-36' residue, while it has no activity on mono- and dimethylated residues. Demethylation of Lys residue generates formaldehyde and succinate. Participates in transcriptional repression of ASCL2 and E2F-responsive promoters via the recruitment of histone deacetylases and NCOR1, respectively. This Pongo abelii (Sumatran orangutan) protein is Lysine-specific demethylase 4A (KDM4A).